The primary structure comprises 312 residues: Very-long-chain 3-oxoacyl-CoA reductase (312 aa).

The chain crosses the membrane as a helical span at residues 4-24; it reads ALPAAGFLYWVGASTVAYLAL. Residue 50 to 79 coordinates NADP(+); that stretch reads GEWAVVTGGTDGIGKSYAEELAKRGMKIVL. 2 helical membrane passes run 182 to 202 and 271 to 291; these read GAIL…LTIY and GYPI…WLYF. Substrate is bound at residue Ser189. Tyr202 acts as the Proton acceptor in catalysis. The short motif at 308 to 312 is the Di-lysine motif element; that stretch reads KMKMN.

This sequence belongs to the short-chain dehydrogenases/reductases (SDR) family. 17-beta-HSD 3 subfamily.

It is found in the endoplasmic reticulum membrane. It catalyses the reaction a very-long-chain (3R)-3-hydroxyacyl-CoA + NADP(+) = a very-long-chain 3-oxoacyl-CoA + NADPH + H(+). The catalysed reaction is 17beta-estradiol + NAD(+) = estrone + NADH + H(+). The enzyme catalyses 17beta-estradiol + NADP(+) = estrone + NADPH + H(+). It carries out the reaction 3-oxooctadecanoyl-CoA + NADPH + H(+) = (3R)-hydroxyoctadecanoyl-CoA + NADP(+). It catalyses the reaction (7Z,10Z,13Z,16Z)-3-oxodocosatetraenoyl-CoA + NADPH + H(+) = (3R)-hydroxy-(7Z,10Z,13Z,16Z)-docosatetraenoyl-CoA + NADP(+). The catalysed reaction is 3-oxo-(7Z,10Z,13Z,16Z,19Z)-docosapentaenoyl-CoA + NADPH + H(+) = (3R)-hydroxy-(7Z,10Z,13Z,16Z,19Z)-docosapentaenoyl-CoA + NADP(+). The enzyme catalyses (8Z,11Z,14Z)-3-oxoeicosatrienoyl-CoA + NADPH + H(+) = (3R)-hydroxy-(8Z,11Z,14Z)-eicosatrienoyl-CoA + NADP(+). It functions in the pathway lipid metabolism; fatty acid biosynthesis. It participates in steroid biosynthesis; estrogen biosynthesis. Catalyzes the second of the four reactions of the long-chain fatty acids elongation cycle. This endoplasmic reticulum-bound enzymatic process, allows the addition of two carbons to the chain of long- and very long-chain fatty acids/VLCFAs per cycle. This enzyme has a 3-ketoacyl-CoA reductase activity, reducing 3-ketoacyl-CoA to 3-hydroxyacyl-CoA, within each cycle of fatty acid elongation. Thereby, it may participate in the production of VLCFAs of different chain lengths that are involved in multiple biological processes as precursors of membrane lipids and lipid mediators. May also catalyze the transformation of estrone (E1) into estradiol (E2) and play a role in estrogen formation. In Bos taurus (Bovine), this protein is Very-long-chain 3-oxoacyl-CoA reductase (HSD17B12).